Here is an 831-residue protein sequence, read N- to C-terminus: G-type lectin S-receptor-like serine/threonine-protein kinase At1g61390 (831 aa).

Positions 1–42 (MYKLPQRNCADKQEYTVHMRKMGMVIFACLLLLIIFPTFGYA) are cleaved as a signal peptide. Residues 43-162 (DINTSSPLSI…VSGKTLWKSF (120 aa)) enclose the Bulb-type lectin domain. Residues 43 to 448 (DINTSSPLSI…SSELAGSNRT (406 aa)) are Extracellular-facing. N-linked (GlcNAc...) asparagine glycans are attached at residues asparagine 45, asparagine 71, asparagine 106, and asparagine 112. Residues 298–334 (PTSSCDLYRACGPFGLCVRSRNPKCICLKGFVPKSDD) form the EGF-like; atypical domain. 2 disulfides stabilise this stretch: cysteine 302/cysteine 314 and cysteine 308/cysteine 322. N-linked (GlcNAc...) asparagine glycosylation is found at asparagine 340, asparagine 356, asparagine 399, and asparagine 446. Positions 353–439 (CHTNSSTKTQ…GESLSLRLAS (87 aa)) constitute a PAN domain. 2 cysteine pairs are disulfide-bonded: cysteine 392–cysteine 413 and cysteine 396–cysteine 402. The helical transmembrane segment at 449 to 469 (KIILGTTVSLSIFVILVFAAY) threads the bilayer. The Cytoplasmic portion of the chain corresponds to 470-831 (KSWRYRTKQN…EITQSVIQGR (362 aa)). The Protein kinase domain occupies 520 to 803 (FSSSNKLGQG…ELPSPKQPTF (284 aa)). Residues 526–534 (LGQGGFGPV) and lysine 548 each bind ATP. Phosphoserine occurs at positions 554 and 569. Residues 609-626 (TLKFEIDWQKRFNIIQGV) are caM-binding. Residue aspartate 645 is the Proton acceptor of the active site. Residues serine 649 and serine 662 each carry the phosphoserine modification. Residue threonine 679 is modified to Phosphothreonine. A phosphoserine mark is found at serine 722 and serine 814.

This sequence belongs to the protein kinase superfamily. Ser/Thr protein kinase family.

Its subcellular location is the cell membrane. It catalyses the reaction L-seryl-[protein] + ATP = O-phospho-L-seryl-[protein] + ADP + H(+). The enzyme catalyses L-threonyl-[protein] + ATP = O-phospho-L-threonyl-[protein] + ADP + H(+). The protein is G-type lectin S-receptor-like serine/threonine-protein kinase At1g61390 of Arabidopsis thaliana (Mouse-ear cress).